Consider the following 189-residue polypeptide: MSLKDRFDKFIEYFTEDGDDVQVAESRVQQQAVKPSNSRPAQQEPVRDIKQPRLVSSSSQHVTNTPSSNENITRLHARQQELAQNHSVATSEKVTIDVRYPKKYEDAPAIVDLLLANESVLIDFQYMTEVQARRCIDYLDGAKQVLMGNLRRVSGTMYLLTPVNVVVNIEDIKLPDGVHSEFDFDMKRR.

The tract at residues 25-70 (ESRVQQQAVKPSNSRPAQQEPVRDIKQPRLVSSSSQHVTNTPSSNE) is disordered. 2 stretches are compositionally biased toward polar residues: residues 27–41 (RVQQ…SRPA) and 54–70 (LVSS…SSNE).

The protein belongs to the SepF family. In terms of assembly, homodimer. Interacts with FtsZ.

It is found in the cytoplasm. Its function is as follows. Cell division protein that is part of the divisome complex and is recruited early to the Z-ring. Probably stimulates Z-ring formation, perhaps through the cross-linking of FtsZ protofilaments. Its function overlaps with FtsA. This chain is Cell division protein SepF, found in Streptococcus gordonii (strain Challis / ATCC 35105 / BCRC 15272 / CH1 / DL1 / V288).